Reading from the N-terminus, the 302-residue chain is Putative S-adenosyl-L-methionine-dependent methyltransferase MMAR_1068 (302 aa).

S-adenosyl-L-methionine is bound by residues D127 and 156-157 (DL).

It belongs to the UPF0677 family.

Its function is as follows. Exhibits S-adenosyl-L-methionine-dependent methyltransferase activity. The sequence is that of Putative S-adenosyl-L-methionine-dependent methyltransferase MMAR_1068 from Mycobacterium marinum (strain ATCC BAA-535 / M).